Here is a 320-residue protein sequence, read N- to C-terminus: Transcription factor MYB80 (320 aa).

HTH myb-type domains follow at residues 9–65 (KENV…RPDL) and 66–116 (KHGQ…KKKL). 2 consecutive DNA-binding regions (H-T-H motif) follow at residues 37–61 (WRLI…TNYL) and 89–112 (WSLI…NTKL). The segment at 257-283 (TAAAEEEERRKLKGEVVDQEEIGSEGG) is disordered. Over residues 263–272 (EERRKLKGEV) the composition is skewed to basic and acidic residues.

In terms of tissue distribution, expressed in the tapetum and middle layer of developing anthers. Expressed in trichomes.

The protein resides in the nucleus. Transcription factor that binds to the DNA sequence 5'-CCAACC-3'. Regulates directly PME5, UND and GLOX1. Essential for tapetum development in anthers and microsporogenesis. Regulates the timing of tapetal programmed cell death (PCD) which is critical for pollen development. May act through the activation of UND, encoding an A1 aspartic protease. Required for anther development by regulating tapetum development, callose dissolution and exine formation. Acts upstream of A6 and FAR2/MS2, two genes required for pollen exine formation. Negatively regulates trichome endoreduplication and trichome branching. The protein is Transcription factor MYB80 of Arabidopsis thaliana (Mouse-ear cress).